A 766-amino-acid polypeptide reads, in one-letter code: Phosphoribosylformylglycinamidine synthase subunit PurL (766 aa).

Residue His49 is part of the active site. 2 residues coordinate ATP: Tyr52 and Lys91. Glu93 lines the Mg(2+) pocket. Substrate is bound by residues Ser94–His97 and Arg116. His95 serves as the catalytic Proton acceptor. Position 117 (Asp117) interacts with Mg(2+). Residue Gln240 coordinates substrate. Mg(2+) is bound at residue Asp268. Substrate is bound at residue Glu312–Gln314. Asp508 and Gly545 together coordinate ATP. Asn546 serves as a coordination point for Mg(2+). Ser548 contributes to the substrate binding site.

The protein belongs to the FGAMS family. In terms of assembly, monomer. Part of the FGAM synthase complex composed of 1 PurL, 1 PurQ and 2 PurS subunits.

Its subcellular location is the cytoplasm. The enzyme catalyses N(2)-formyl-N(1)-(5-phospho-beta-D-ribosyl)glycinamide + L-glutamine + ATP + H2O = 2-formamido-N(1)-(5-O-phospho-beta-D-ribosyl)acetamidine + L-glutamate + ADP + phosphate + H(+). It participates in purine metabolism; IMP biosynthesis via de novo pathway; 5-amino-1-(5-phospho-D-ribosyl)imidazole from N(2)-formyl-N(1)-(5-phospho-D-ribosyl)glycinamide: step 1/2. In terms of biological role, part of the phosphoribosylformylglycinamidine synthase complex involved in the purines biosynthetic pathway. Catalyzes the ATP-dependent conversion of formylglycinamide ribonucleotide (FGAR) and glutamine to yield formylglycinamidine ribonucleotide (FGAM) and glutamate. The FGAM synthase complex is composed of three subunits. PurQ produces an ammonia molecule by converting glutamine to glutamate. PurL transfers the ammonia molecule to FGAR to form FGAM in an ATP-dependent manner. PurS interacts with PurQ and PurL and is thought to assist in the transfer of the ammonia molecule from PurQ to PurL. The polypeptide is Phosphoribosylformylglycinamidine synthase subunit PurL (Synechococcus sp. (strain CC9902)).